A 232-amino-acid polypeptide reads, in one-letter code: Phosphatidylserine decarboxylase proenzyme (232 aa).

The active-site Schiff-base intermediate with substrate; via pyruvic acid is the Ser190. At Ser190 the chain carries Pyruvic acid (Ser); by autocatalysis.

The protein belongs to the phosphatidylserine decarboxylase family. PSD-A subfamily. As to quaternary structure, heterodimer of a large membrane-associated beta subunit and a small pyruvoyl-containing alpha subunit. Pyruvate is required as a cofactor. In terms of processing, is synthesized initially as an inactive proenzyme. Formation of the active enzyme involves a self-maturation process in which the active site pyruvoyl group is generated from an internal serine residue via an autocatalytic post-translational modification. Two non-identical subunits are generated from the proenzyme in this reaction, and the pyruvate is formed at the N-terminus of the alpha chain, which is derived from the carboxyl end of the proenzyme. The post-translation cleavage follows an unusual pathway, termed non-hydrolytic serinolysis, in which the side chain hydroxyl group of the serine supplies its oxygen atom to form the C-terminus of the beta chain, while the remainder of the serine residue undergoes an oxidative deamination to produce ammonia and the pyruvoyl prosthetic group on the alpha chain.

The protein localises to the cell membrane. It carries out the reaction a 1,2-diacyl-sn-glycero-3-phospho-L-serine + H(+) = a 1,2-diacyl-sn-glycero-3-phosphoethanolamine + CO2. The protein operates within phospholipid metabolism; phosphatidylethanolamine biosynthesis; phosphatidylethanolamine from CDP-diacylglycerol: step 2/2. Catalyzes the formation of phosphatidylethanolamine (PtdEtn) from phosphatidylserine (PtdSer). The chain is Phosphatidylserine decarboxylase proenzyme from Brucella anthropi (strain ATCC 49188 / DSM 6882 / CCUG 24695 / JCM 21032 / LMG 3331 / NBRC 15819 / NCTC 12168 / Alc 37) (Ochrobactrum anthropi).